The primary structure comprises 420 residues: UDP-N-acetylglucosamine 1-carboxyvinyltransferase (420 aa).

Phosphoenolpyruvate is bound at residue 22–23; sequence KN. Arg93 is a UDP-N-acetyl-alpha-D-glucosamine binding site. Cys117 functions as the Proton donor in the catalytic mechanism. The residue at position 117 (Cys117) is a 2-(S-cysteinyl)pyruvic acid O-phosphothioketal. Positions 307 and 329 each coordinate UDP-N-acetyl-alpha-D-glucosamine.

Belongs to the EPSP synthase family. MurA subfamily.

The protein localises to the cytoplasm. The catalysed reaction is phosphoenolpyruvate + UDP-N-acetyl-alpha-D-glucosamine = UDP-N-acetyl-3-O-(1-carboxyvinyl)-alpha-D-glucosamine + phosphate. Its pathway is cell wall biogenesis; peptidoglycan biosynthesis. Functionally, cell wall formation. Adds enolpyruvyl to UDP-N-acetylglucosamine. This chain is UDP-N-acetylglucosamine 1-carboxyvinyltransferase, found in Shewanella pealeana (strain ATCC 700345 / ANG-SQ1).